The following is a 382-amino-acid chain: Flap endonuclease 1 (382 aa).

Positions 1–105 (MGIKGLNAII…HELTKRSSRR (105 aa)) are N-domain. D34 contributes to the Mg(2+) binding site. Residues R47 and R71 each coordinate DNA. The Mg(2+) site is built by D87, E156, E158, D177, and D179. The I-domain stretch occupies residues 120–251 (EKMKQERRLV…VTALKLIKTH (132 aa)). E156 lines the DNA pocket. Residues G229 and D231 each coordinate DNA. Residue D231 coordinates Mg(2+). The interaction with PCNA stretch occupies residues 339–347 (IQGRLDGFF). Residues 358-382 (AAAAKRAQENKKLNKNKNKVTKGRR) form a disordered region. Basic residues predominate over residues 370–382 (LNKNKNKVTKGRR).

Belongs to the XPG/RAD2 endonuclease family. FEN1 subfamily. In terms of assembly, interacts with PCNA. Three molecules of RAD27 bind to one PCNA trimer with each molecule binding to one PCNA monomer. PCNA stimulates the nuclease activity without altering cleavage specificity. The cofactor is Mg(2+). Phosphorylated. Phosphorylation upon DNA damage induces relocalization to the nuclear plasma.

Its subcellular location is the nucleus. The protein localises to the nucleolus. It localises to the nucleoplasm. It is found in the mitochondrion. Functionally, structure-specific nuclease with 5'-flap endonuclease and 5'-3' exonuclease activities involved in DNA replication and repair. During DNA replication, cleaves the 5'-overhanging flap structure that is generated by displacement synthesis when DNA polymerase encounters the 5'-end of a downstream Okazaki fragment. It enters the flap from the 5'-end and then tracks to cleave the flap base, leaving a nick for ligation. Also involved in the long patch base excision repair (LP-BER) pathway, by cleaving within the apurinic/apyrimidinic (AP) site-terminated flap. Acts as a genome stabilization factor that prevents flaps from equilibrating into structures that lead to duplications and deletions. Also possesses 5'-3' exonuclease activity on nicked or gapped double-stranded DNA, and exhibits RNase H activity. Also involved in replication and repair of rDNA and in repairing mitochondrial DNA. This chain is Flap endonuclease 1, found in Saccharomyces cerevisiae (strain YJM789) (Baker's yeast).